A 114-amino-acid chain; its full sequence is Putative small ubiquitin-related modifier 4 (114 aa).

The disordered stretch occupies residues M1–K20. One can recognise a Ubiquitin-like domain in the interval T26–G104. A Glycyl lysine isopeptide (Gly-Lys) (interchain with K-? in acceptor proteins) cross-link involves residue G104.

This sequence belongs to the ubiquitin family. SUMO subfamily. As to quaternary structure, interacts with SAE2, SCE1, SIZ1 and MMS21 Covalently attached to a number of proteins.

Its subcellular location is the nucleus. The protein localises to the cytoplasm. Ubiquitin-like protein which can be covalently attached to target lysines as a monomer. Does not seem to be involved in protein degradation and may function as an antagonist of ubiquitin in the degradation process. This is Putative small ubiquitin-related modifier 4 (SUMO4) from Arabidopsis thaliana (Mouse-ear cress).